The sequence spans 945 residues: Isoleucine--tRNA ligase (945 aa).

Residues 1-10 (MSNKKADSKP) are compositionally biased toward basic and acidic residues. Residues 1–21 (MSNKKADSKPQAKYPVNLLDT) are disordered. The 'HIGH' region signature appears at 66 to 76 (PYANGDIHLGH). E581 serves as a coordination point for L-isoleucyl-5'-AMP. A 'KMSKS' region motif is present at residues 622–626 (KMSKS). ATP is bound at residue K625. The Zn(2+) site is built by C908, C911, C928, and C931.

Belongs to the class-I aminoacyl-tRNA synthetase family. IleS type 1 subfamily. As to quaternary structure, monomer. It depends on Zn(2+) as a cofactor.

It localises to the cytoplasm. The catalysed reaction is tRNA(Ile) + L-isoleucine + ATP = L-isoleucyl-tRNA(Ile) + AMP + diphosphate. Its function is as follows. Catalyzes the attachment of isoleucine to tRNA(Ile). As IleRS can inadvertently accommodate and process structurally similar amino acids such as valine, to avoid such errors it has two additional distinct tRNA(Ile)-dependent editing activities. One activity is designated as 'pretransfer' editing and involves the hydrolysis of activated Val-AMP. The other activity is designated 'posttransfer' editing and involves deacylation of mischarged Val-tRNA(Ile). The sequence is that of Isoleucine--tRNA ligase from Burkholderia multivorans (strain ATCC 17616 / 249).